We begin with the raw amino-acid sequence, 704 residues long: Elongation factor G (704 aa).

The 284-residue stretch at 8 to 291 (DKVRNIGIMA…AVVEYLASPV (284 aa)) folds into the tr-type G domain. Residues 17–24 (AHIDAGKT), 90–94 (DTPGH), and 144–147 (NKMD) contribute to the GTP site.

It belongs to the TRAFAC class translation factor GTPase superfamily. Classic translation factor GTPase family. EF-G/EF-2 subfamily.

Its subcellular location is the cytoplasm. Catalyzes the GTP-dependent ribosomal translocation step during translation elongation. During this step, the ribosome changes from the pre-translocational (PRE) to the post-translocational (POST) state as the newly formed A-site-bound peptidyl-tRNA and P-site-bound deacylated tRNA move to the P and E sites, respectively. Catalyzes the coordinated movement of the two tRNA molecules, the mRNA and conformational changes in the ribosome. This chain is Elongation factor G, found in Pelodictyon phaeoclathratiforme (strain DSM 5477 / BU-1).